Reading from the N-terminus, the 212-residue chain is Probable GTP-binding protein EngB (212 aa).

An EngB-type G domain is found at 38–210; the sequence is SLPEIAFVGK…KASLAKCIKF (173 aa). Residues 46 to 53, 73 to 77, 91 to 94, 158 to 161, and 189 to 191 contribute to the GTP site; these read GKSNVGKS, GRTRQ, DLPG, TKSD, and VSN. Ser-53 and Thr-75 together coordinate Mg(2+).

Belongs to the TRAFAC class TrmE-Era-EngA-EngB-Septin-like GTPase superfamily. EngB GTPase family. It depends on Mg(2+) as a cofactor.

Its function is as follows. Necessary for normal cell division and for the maintenance of normal septation. The polypeptide is Probable GTP-binding protein EngB (Rickettsia rickettsii (strain Sheila Smith)).